The chain runs to 81 residues: MKTLLLTLLVVTIVCLDLGYTLKCNKLVPLFYKTCPAGKNLCYKMFMVSNLTVPVKRGCIDVCPKNSALVKYVCCNTDRCN.

Positions 1 to 21 (MKTLLLTLLVVTIVCLDLGYT) are cleaved as a signal peptide. 4 disulfide bridges follow: Cys-24–Cys-42, Cys-35–Cys-59, Cys-63–Cys-74, and Cys-75–Cys-80.

Belongs to the three-finger toxin family. Short-chain subfamily. Type IA cytotoxin sub-subfamily. In terms of assembly, monomer in solution; Homodimer and oligomer in the presence of negatively charged lipids forming a pore with a size ranging between 20 and 30 Angstroms. In terms of tissue distribution, expressed by the venom gland.

Its subcellular location is the secreted. The protein resides in the target cell membrane. Functionally, shows cytolytic activity on many different cells by forming pore in lipid membranes. In vivo, increases heart rate or kills the animal by cardiac arrest. In addition, it binds to heparin with high affinity, interacts with Kv channel-interacting protein 1 (KCNIP1) in a calcium-independent manner, and binds to integrin alpha-V/beta-3 (ITGAV/ITGB3) with moderate affinity. This is Cytotoxin 5b from Naja sputatrix (Malayan spitting cobra).